The primary structure comprises 142 residues: FAD synthase (142 aa).

ATP contacts are provided by residues 9 to 10 (TF), 14 to 17 (HPGH), and Asp92.

This sequence belongs to the archaeal FAD synthase family. Homodimer. A divalent metal cation is required as a cofactor.

It catalyses the reaction FMN + ATP + H(+) = FAD + diphosphate. The protein operates within cofactor biosynthesis; FAD biosynthesis; FAD from FMN: step 1/1. Its function is as follows. Catalyzes the transfer of the AMP portion of ATP to flavin mononucleotide (FMN) to produce flavin adenine dinucleotide (FAD) coenzyme. The chain is FAD synthase from Methanohalophilus mahii (strain ATCC 35705 / DSM 5219 / SLP).